Reading from the N-terminus, the 1643-residue chain is Outer membrane protein B (1643 aa).

Positions 1329-1352 (GTLRYLSNAETSDVAGSATGAVSS) are excised as a propeptide. Positions 1355–1643 (EAEVSYGVWA…QGTLKVRVNF (289 aa)) constitute an Autotransporter domain.

It belongs to the rickettsiae OmpA/OmpB family.

It localises to the periplasm. Its subcellular location is the secreted. It is found in the cell surface. The protein localises to the cell outer membrane. The 120 kDa surface-exposed protein is a major structural protein which may play a role as a rickettsial virulence factor and/or immunogen during infection. Its function is as follows. The 32 kDa beta peptide may serve as a membrane anchor. It has been shown to adhere to biotinylated Vero cell proteins. The protein is Outer membrane protein B (ompB) of Rickettsia prowazekii (strain Madrid E).